Here is a 117-residue protein sequence, read N- to C-terminus: Small ribosomal subunit protein uS17 (117 aa).

Residues 1–42 (MMAEAKKAAPKKAATAASKDADAKGPKHTPPNPKVRGRRKTR) are disordered.

This sequence belongs to the universal ribosomal protein uS17 family. In terms of assembly, part of the 30S ribosomal subunit.

One of the primary rRNA binding proteins, it binds specifically to the 5'-end of 16S ribosomal RNA. The protein is Small ribosomal subunit protein uS17 of Mycolicibacterium paratuberculosis (strain ATCC BAA-968 / K-10) (Mycobacterium paratuberculosis).